Consider the following 341-residue polypeptide: MLDRSFSAEIQQRIDQKTKPLGALGQLERVAHHLALIQSQNQDQAVTQLAIHQPTVLVFAADHGIAAQGVSIAPSAVTEQMVQNFLAGGAAINCFCRTEHAAMRVIDCGILRAQPAHADLIEQRLGAGTHNLAEQAAMSSEQVQEGIALGKALIHREVESGCNLLMFGEMGIGNTSSAAAILAALSGLPIEVCVGRGTGITDEQYQRKRALVTQGVERCLGAAPQDVLQQVGGFEIVQMVGAFMGAYEKQTPVLVDGFIVTVAAYVATLIEPNVRDFLLFAHCSQETGHRAVLEMLAAEPLLDLGLRLGEGTGAVLALGLVRAAVEFYNHMASFADAGVTV.

E310 (proton acceptor) is an active-site residue.

The protein belongs to the CobT family.

It carries out the reaction 5,6-dimethylbenzimidazole + nicotinate beta-D-ribonucleotide = alpha-ribazole 5'-phosphate + nicotinate + H(+). It functions in the pathway nucleoside biosynthesis; alpha-ribazole biosynthesis; alpha-ribazole from 5,6-dimethylbenzimidazole: step 1/2. In terms of biological role, catalyzes the synthesis of alpha-ribazole-5'-phosphate from nicotinate mononucleotide (NAMN) and 5,6-dimethylbenzimidazole (DMB). This chain is Nicotinate-nucleotide--dimethylbenzimidazole phosphoribosyltransferase, found in Vibrio cholerae serotype O1 (strain ATCC 39315 / El Tor Inaba N16961).